Reading from the N-terminus, the 33-residue chain is Large ribosomal subunit protein uL24 (33 aa).

This sequence belongs to the universal ribosomal protein uL24 family. In terms of assembly, component of the large ribosomal subunit.

The protein resides in the cytoplasm. Component of the large ribosomal subunit. The ribosome is a large ribonucleoprotein complex responsible for the synthesis of proteins in the cell. The protein is Large ribosomal subunit protein uL24 (rpl26) of Xenopus laevis (African clawed frog).